Consider the following 276-residue polypeptide: NH(3)-dependent NAD(+) synthetase (276 aa).

43–50 (GISGGVDS) is a binding site for ATP. Asp49 is a Mg(2+) binding site. Arg146 is a deamido-NAD(+) binding site. Residue Thr166 participates in ATP binding. Position 171 (Glu171) interacts with Mg(2+). 2 residues coordinate deamido-NAD(+): Lys179 and Asp186. ATP is bound by residues Lys195 and Thr217. Residue 266–267 (HK) coordinates deamido-NAD(+).

It belongs to the NAD synthetase family. In terms of assembly, homodimer.

It catalyses the reaction deamido-NAD(+) + NH4(+) + ATP = AMP + diphosphate + NAD(+) + H(+). The protein operates within cofactor biosynthesis; NAD(+) biosynthesis; NAD(+) from deamido-NAD(+) (ammonia route): step 1/1. Functionally, catalyzes the ATP-dependent amidation of deamido-NAD to form NAD. Uses ammonia as a nitrogen source. The sequence is that of NH(3)-dependent NAD(+) synthetase from Aliivibrio fischeri (strain MJ11) (Vibrio fischeri).